Consider the following 492-residue polypeptide: MTAHFPFDNSYVALPPNFFARVAPTPVAAPRLIKLNRPLAVQLGLDPDLLETPEGAEILSGNQMPETAASIAMAYAGHQFGNFVPQLGDGRAILLGEVVDRNGVRRDIQLKGAGRTPFSRMGDGRAALGPVLREYIVSEAMAALGIPTTRSLAAVLTGETVLRDPIQPGAVLTRVASSHIRVGTFQYFAARGDLASVRALADHAIARHYPEAAQAPSPYLALLEGVIGRQAELVASWMMVGFIHGVMNTDNCSVAGETIDYGPCAFMDTFDPKTVYSSIDQFGRYAYGNQPPIALWNLTRLAECLVRLLADDDDKGIEIAQTALGGFAEQFNAAYLAKLAAKLGLFTSQPDDQQLSQEFLTALAKGEADFTLAFRRLSDAAVDPSDLGEVRALFADPAAFDEWAPRWRARIATEPQDATTRQAAMRRVNPAYIPRNHRIEAVIRAAVDRDDFAPFEEILTVLANPFEEKAEFARYAEPPQPHEQVLETFCGT.

ATP contacts are provided by glycine 88, glycine 90, arginine 91, lysine 111, aspartate 123, glycine 124, arginine 174, and arginine 181. Aspartate 250 (proton acceptor) is an active-site residue. Residues asparagine 251 and aspartate 260 each contribute to the Mg(2+) site. Residue aspartate 260 coordinates ATP.

This sequence belongs to the SELO family. Mg(2+) is required as a cofactor. The cofactor is Mn(2+).

It carries out the reaction L-seryl-[protein] + ATP = 3-O-(5'-adenylyl)-L-seryl-[protein] + diphosphate. The catalysed reaction is L-threonyl-[protein] + ATP = 3-O-(5'-adenylyl)-L-threonyl-[protein] + diphosphate. It catalyses the reaction L-tyrosyl-[protein] + ATP = O-(5'-adenylyl)-L-tyrosyl-[protein] + diphosphate. The enzyme catalyses L-histidyl-[protein] + UTP = N(tele)-(5'-uridylyl)-L-histidyl-[protein] + diphosphate. It carries out the reaction L-seryl-[protein] + UTP = O-(5'-uridylyl)-L-seryl-[protein] + diphosphate. The catalysed reaction is L-tyrosyl-[protein] + UTP = O-(5'-uridylyl)-L-tyrosyl-[protein] + diphosphate. Functionally, nucleotidyltransferase involved in the post-translational modification of proteins. It can catalyze the addition of adenosine monophosphate (AMP) or uridine monophosphate (UMP) to a protein, resulting in modifications known as AMPylation and UMPylation. The chain is Protein nucleotidyltransferase YdiU from Rhodopseudomonas palustris (strain ATCC BAA-98 / CGA009).